The primary structure comprises 293 residues: Glycine--tRNA ligase alpha subunit (293 aa).

The protein belongs to the class-II aminoacyl-tRNA synthetase family. As to quaternary structure, tetramer of two alpha and two beta subunits.

The protein localises to the cytoplasm. It catalyses the reaction tRNA(Gly) + glycine + ATP = glycyl-tRNA(Gly) + AMP + diphosphate. This Acaryochloris marina (strain MBIC 11017) protein is Glycine--tRNA ligase alpha subunit.